The chain runs to 476 residues: Angiotensinogen (476 aa).

Residues 1-24 (MAPAGMSLRATILCLLAWAGLAAG) form the signal peptide. N-linked (GlcNAc...) asparagine glycosylation is found at N38, N161, N295, and N319. Cysteines 42 and 162 form a disulfide.

It belongs to the serpin family. Post-translationally, in response to low blood pressure, the enzyme renin/REN cleaves angiotensinogen to produce angiotensin-1. Angiotensin-1 is a substrate of ACE (angiotensin converting enzyme) that removes a dipeptide to yield the physiologically active peptide angiotensin-2. Angiotensin-1 and angiotensin-2 can be further processed to generate angiotensin-3, angiotensin-4. Angiotensin 1-9 is cleaved from angiotensin-1 by ACE2 and can be further processed by ACE to produce angiotensin 1-7, angiotensin 1-5 and angiotensin 1-4. Angiotensin 1-7 has also been proposed to be cleaved from angiotensin-2 by ACE2 or from angiotensin-1 by MME (neprilysin). In terms of processing, the disulfide bond is labile. Angiotensinogen is present in the circulation in a near 40:60 ratio with the oxidized disulfide-bonded form, which preferentially interacts with receptor-bound renin.

The protein resides in the secreted. Functionally, essential component of the renin-angiotensin system (RAS), a potent regulator of blood pressure, body fluid and electrolyte homeostasis. In terms of biological role, acts directly on vascular smooth muscle as a potent vasoconstrictor, affects cardiac contractility and heart rate through its action on the sympathetic nervous system, and alters renal sodium and water absorption through its ability to stimulate the zona glomerulosa cells of the adrenal cortex to synthesize and secrete aldosterone. Acts by binding to angiotensin receptors AGTR1 and AGTR2. Also binds the DEAR/FBXW7-AS1 receptor. Stimulates aldosterone release. Its function is as follows. Is a ligand for the G-protein coupled receptor MAS1. Has vasodilator and antidiuretic effects. Has an antithrombotic effect that involves MAS1-mediated release of nitric oxide from platelets. This is Angiotensinogen (AGT) from Gorilla gorilla gorilla (Western lowland gorilla).